Here is a 75-residue protein sequence, read N- to C-terminus: CDC42 small effector protein 2-B (75 aa).

2 S-palmitoyl cysteine lipidation sites follow: cysteine 10 and cysteine 11. In terms of domain architecture, CRIB spans 29–42 (IGEPMNFVHTAHVG).

It belongs to the CDC42SE/SPEC family.

Its subcellular location is the cytoplasm. The protein localises to the cytoskeleton. It localises to the cell membrane. Functionally, probably involved in the organization of the actin cytoskeleton by acting downstream of CDC42, inducing actin filament assembly. The protein is CDC42 small effector protein 2-B (cdc42se2-b) of Xenopus laevis (African clawed frog).